Reading from the N-terminus, the 250-residue chain is Membrane-spanning 4-domains subfamily A member 8 (250 aa).

At 1–74 (MNSMTSAVPV…ALKEGKTLGA (74 aa)) the chain is on the cytoplasmic side. The chain crosses the membrane as a helical span at residues 75–95 (IQIIIGLAHIGLGSIMATVLV). At 96–98 (GEY) the chain is on the extracellular side. Residues 99-119 (LSISFYGGFPFWGGLWFIISG) form a helical membrane-spanning segment. The Cytoplasmic portion of the chain corresponds to 120–136 (SLSVAAENQPYSYCLLS). A helical membrane pass occupies residues 137–157 (GSLGLNIVSAICSAVGVILFI). The Extracellular portion of the chain corresponds to 158–180 (TDLSIPHPYAYPDYYPYAWGVNP). The chain crosses the membrane as a helical span at residues 181-201 (GMAISGVLLVFCLLEFGIACA). Residues 202–250 (SSHFGCQLVCCQSSNVSVIYPNIYAANPVITPEPVTSPPSYSSEIQANK) lie on the Cytoplasmic side of the membrane.

Belongs to the MS4A family. As to expression, expressed by hematopoietic tissues and cells lines.

It localises to the membrane. In terms of biological role, may be involved in signal transduction as a component of a multimeric receptor complex. This chain is Membrane-spanning 4-domains subfamily A member 8 (MS4A8), found in Homo sapiens (Human).